Consider the following 580-residue polypeptide: Long-chain-fatty-acid--AMP ligase FadD28 (580 aa).

A disordered region spans residues 421–440 (SERTFGGKIVTPSPGTPEGP).

The protein belongs to the ATP-dependent AMP-binding enzyme family.

It catalyses the reaction holo-[mycocerosate synthase] + a long-chain fatty acid + ATP = a long-chain fatty acyl-[mycocerosate synthase] + AMP + diphosphate. The catalysed reaction is a long-chain fatty acid + ATP + H(+) = a long-chain fatty acyl-AMP + diphosphate. The enzyme catalyses holo-[mycocerosate synthase] + a long-chain fatty acyl-AMP = a long-chain fatty acyl-[mycocerosate synthase] + AMP + H(+). It participates in lipid metabolism; fatty acid biosynthesis. Functionally, involved in the biosynthesis of phthiocerol dimycocerosate (PDIM), a cell wall-associated lipid found only in pathogenic mycobacteria. Catalyzes the activation of long-chain fatty acids as acyl-adenylates (acyl-AMP), which are then transferred to the multifunctional polyketide synthase Mas for further chain extension. This chain is Long-chain-fatty-acid--AMP ligase FadD28 (fadD28), found in Mycobacterium bovis (strain ATCC BAA-935 / AF2122/97).